The sequence spans 864 residues: Putative Gly-rich membrane protein Bcell_0380 (864 aa).

A helical membrane pass occupies residues 7–27 (ITFLAAFICIIFVIYAIYHSV). The interval 372-399 (TVENSFYDEDTTGQSDTGKGTPMSTADM) is disordered. Residues 383–395 (TGQSDTGKGTPMS) are compositionally biased toward polar residues.

It localises to the cell membrane. The protein is Putative Gly-rich membrane protein Bcell_0380 of Evansella cellulosilytica (strain ATCC 21833 / DSM 2522 / FERM P-1141 / JCM 9156 / N-4) (Bacillus cellulosilyticus).